The sequence spans 114 residues: MQQAKAVARTVRIAPRKARLVMDLIRGKQVGEAVSILNHTPKAASPIIEKVLKSAIANAEHNYEMDANNLVVTQAYVNEGPTLKRFRPRAMGRASQINKRTSHITIVVSEKKEG.

It belongs to the universal ribosomal protein uL22 family. As to quaternary structure, part of the 50S ribosomal subunit.

This protein binds specifically to 23S rRNA; its binding is stimulated by other ribosomal proteins, e.g. L4, L17, and L20. It is important during the early stages of 50S assembly. It makes multiple contacts with different domains of the 23S rRNA in the assembled 50S subunit and ribosome. In terms of biological role, the globular domain of the protein is located near the polypeptide exit tunnel on the outside of the subunit, while an extended beta-hairpin is found that lines the wall of the exit tunnel in the center of the 70S ribosome. The chain is Large ribosomal subunit protein uL22 from Bacillus licheniformis (strain ATCC 14580 / DSM 13 / JCM 2505 / CCUG 7422 / NBRC 12200 / NCIMB 9375 / NCTC 10341 / NRRL NRS-1264 / Gibson 46).